We begin with the raw amino-acid sequence, 430 residues long: uncharacterized protein (430 aa).

The protein resides in the cytoplasm. It is found in the nucleus. This is an uncharacterized protein from Schizosaccharomyces pombe (strain 972 / ATCC 24843) (Fission yeast).